We begin with the raw amino-acid sequence, 278 residues long: Shikimate dehydrogenase (NADP(+)) (278 aa).

Shikimate-binding positions include 19–21 and T66; that span reads SRS. K70 acts as the Proton acceptor in catalysis. 2 residues coordinate shikimate: N91 and D106. NADP(+)-binding positions include 129–133 and F221; that span reads GAGGA. Position 223 (Y223) interacts with shikimate. G242 contacts NADP(+).

It belongs to the shikimate dehydrogenase family. In terms of assembly, homodimer.

The enzyme catalyses shikimate + NADP(+) = 3-dehydroshikimate + NADPH + H(+). It functions in the pathway metabolic intermediate biosynthesis; chorismate biosynthesis; chorismate from D-erythrose 4-phosphate and phosphoenolpyruvate: step 4/7. Its function is as follows. Involved in the biosynthesis of the chorismate, which leads to the biosynthesis of aromatic amino acids. Catalyzes the reversible NADPH linked reduction of 3-dehydroshikimate (DHSA) to yield shikimate (SA). The protein is Shikimate dehydrogenase (NADP(+)) of Anaeromyxobacter sp. (strain K).